Here is a 380-residue protein sequence, read N- to C-terminus: Outer membrane protein assembly factor BamB (380 aa).

The signal sequence occupies residues 1–18 (MVQWKHAALLALALAVVG). Cysteine 19 carries the N-palmitoyl cysteine lipid modification. Cysteine 19 carries the S-diacylglycerol cysteine lipid modification.

This sequence belongs to the BamB family. Part of the Bam complex.

The protein resides in the cell outer membrane. Functionally, part of the outer membrane protein assembly complex, which is involved in assembly and insertion of beta-barrel proteins into the outer membrane. The polypeptide is Outer membrane protein assembly factor BamB (Pseudomonas aeruginosa (strain ATCC 15692 / DSM 22644 / CIP 104116 / JCM 14847 / LMG 12228 / 1C / PRS 101 / PAO1)).